A 227-amino-acid polypeptide reads, in one-letter code: Trypsin (227 aa).

Residues 1–223 (IVGGEDANVQ…YYDVLMEQIN (223 aa)) form the Peptidase S1 domain. Cys27 and Cys43 are joined by a disulfide. Residues His42 and Asp88 each act as charge relay system in the active site. Intrachain disulfides connect Cys150-Cys164 and Cys175-Cys199. Ser179 acts as the Charge relay system in catalysis.

Belongs to the peptidase S1 family.

It catalyses the reaction Preferential cleavage: Arg-|-Xaa, Lys-|-Xaa.. This chain is Trypsin, found in Saccharopolyspora erythraea (Streptomyces erythraeus).